Here is a 354-residue protein sequence, read N- to C-terminus: Guanine nucleotide-binding protein G(t) subunit alpha-2 (354 aa).

The disordered stretch occupies residues 1-27 (MGSGASAEDKELAKRSKELEKKLQEDA). Residue G2 is the site of N-myristoyl glycine attachment. Residues 7–27 (AEDKELAKRSKELEKKLQEDA) show a composition bias toward basic and acidic residues. In terms of domain architecture, G-alpha spans 32 to 354 (KTVKLLLLGA…KENLKDCGLF (323 aa)). The G1 motif stretch occupies residues 35-48 (KLLLLGAGESGKST). Residues 40–47 (GAGESGKS), 175–181 (LRSRVKT), 200–204 (DVGGQ), 269–272 (NKKD), and A326 contribute to the GTP site. Positions 47 and 181 each coordinate Mg(2+). The tract at residues 173–181 (DVLRSRVKT) is G2 motif. Positions 196-205 (FRMFDVGGQR) are G3 motif. Positions 265–272 (VLFLNKKD) are G4 motif. Positions 324 to 329 (TCATDT) are G5 motif.

It belongs to the G-alpha family. G(i/o/t/z) subfamily. As to quaternary structure, g proteins are composed of 3 units; alpha, beta and gamma. The alpha chain contains the guanine nucleotide binding site. As to expression, retinal rod outer segment.

It localises to the cell projection. Its subcellular location is the cilium. It is found in the photoreceptor outer segment. The protein resides in the photoreceptor inner segment. In terms of biological role, guanine nucleotide-binding proteins (G proteins) are involved as modulators or transducers in various transmembrane signaling systems. Transducin is an amplifier and one of the transducers of a visual impulse that performs the coupling between rhodopsin and cGMP-phosphodiesterase. This is Guanine nucleotide-binding protein G(t) subunit alpha-2 (GNAT2) from Bos taurus (Bovine).